Reading from the N-terminus, the 74-residue chain is UPF0057 membrane protein At4g30660 (74 aa).

Helical transmembrane passes span 4-24 (NCEILCEIIIAILLPPLGVCF) and 37-57 (LVLTILGYVPGIIYAIYVIVF).

Belongs to the UPF0057 (PMP3) family.

The protein localises to the membrane. This chain is UPF0057 membrane protein At4g30660, found in Arabidopsis thaliana (Mouse-ear cress).